Consider the following 474-residue polypeptide: Mercuric reductase (474 aa).

Residues alanine 19, glycine 39, and threonine 44 each coordinate FAD. A disulfide bridge links cysteine 45 with cysteine 50. Residues lysine 54, alanine 119, aspartate 315, and valine 323 each contribute to the FAD site. Residues cysteine 471 and cysteine 472 each coordinate Hg(2+).

This sequence belongs to the class-I pyridine nucleotide-disulfide oxidoreductase family. Homodimer. FAD is required as a cofactor.

The catalysed reaction is Hg + NADP(+) + H(+) = Hg(2+) + NADPH. Its function is as follows. Resistance to Hg(2+) in bacteria appears to be governed by a specialized system which includes mercuric reductase. MerA protein is responsible for volatilizing mercury as Hg(0). The polypeptide is Mercuric reductase (merA) (Streptomyces lividans).